Reading from the N-terminus, the 87-residue chain is Large ribosomal subunit protein bL31B (87 aa).

It belongs to the bacterial ribosomal protein bL31 family. Type B subfamily. In terms of assembly, part of the 50S ribosomal subunit.

This chain is Large ribosomal subunit protein bL31B, found in Ralstonia nicotianae (strain ATCC BAA-1114 / GMI1000) (Ralstonia solanacearum).